Here is a 407-residue protein sequence, read N- to C-terminus: Imidazolonepropionase (407 aa).

Fe(3+) is bound by residues histidine 68 and histidine 70. The Zn(2+) site is built by histidine 68 and histidine 70. 3 residues coordinate 4-imidazolone-5-propanoate: arginine 77, tyrosine 140, and histidine 173. N-formimidoyl-L-glutamate is bound at residue tyrosine 140. Histidine 238 lines the Fe(3+) pocket. Histidine 238 provides a ligand contact to Zn(2+). Glutamine 241 contacts 4-imidazolone-5-propanoate. Residue aspartate 313 participates in Fe(3+) binding. Position 313 (aspartate 313) interacts with Zn(2+). 2 residues coordinate N-formimidoyl-L-glutamate: asparagine 315 and glycine 317. Threonine 318 is a binding site for 4-imidazolone-5-propanoate.

The protein belongs to the metallo-dependent hydrolases superfamily. HutI family. Requires Zn(2+) as cofactor. Fe(3+) serves as cofactor.

The protein resides in the cytoplasm. It carries out the reaction 4-imidazolone-5-propanoate + H2O = N-formimidoyl-L-glutamate. Its pathway is amino-acid degradation; L-histidine degradation into L-glutamate; N-formimidoyl-L-glutamate from L-histidine: step 3/3. Catalyzes the hydrolytic cleavage of the carbon-nitrogen bond in imidazolone-5-propanoate to yield N-formimidoyl-L-glutamate. It is the third step in the universal histidine degradation pathway. The polypeptide is Imidazolonepropionase (Burkholderia multivorans (strain ATCC 17616 / 249)).